Consider the following 100-residue polypeptide: Cysteine-rich venom protein VAR1 (100 aa).

The N-terminal stretch at 1 to 22 (MILLKLYLTLAAILCQSRGTTS) is a signal peptide. Residues 41–81 (NKHNDLRRTVDPPAKNMLKMSWDNIIAESAKRAALRCNQNE) form the SCP domain.

This sequence belongs to the CRISP family. Contains 8 disulfide bonds. As to expression, expressed by the venom gland.

Its subcellular location is the secreted. Its function is as follows. Blocks ryanodine receptors, and potassium channels. This Varanus acanthurus (Ridge-tailed monitor) protein is Cysteine-rich venom protein VAR1.